The following is a 389-amino-acid chain: MLENLIKDFKEIFKYSGEVERFFSPGRVNLIGEHTDYNGGFVFPCALDFGTYAVVKKREDKTFKMYSKNFENLGIIEFNLDNLIYDKKDDWANYPKGVIKTFLDRNYKIDSGFDVLFFGNIPNGAGLSSSASIEVLTAVILKDLFKLDVDIIEMVKMCQVAENKFIGVNSGIMDQFAVGMGKKDNAILLDCNTLKYEYVPVKLVNMSIVIANTNKKRGLADSKYNERRTSCEEAVKVLNNNEVNIKYLGELTVTEFEKVKHYITDEEQLKRATHAVTENERAKIAVEFLKKDDIAEFGKLMNKSHTSLRDDYEVTGLELDSLVEAAWEEKGTVGSRMTGAGFGGCTVSIVENDYVDSFIKNVGKKYKEKTGLEASFYIANIGDGAGKVK.

A substrate-binding site is contributed by 33–36; it reads EHTD. ATP contacts are provided by residues Ser67 and 124–130; that span reads GAGLSSS. Mg(2+)-binding residues include Ser130 and Glu162. Asp174 functions as the Proton acceptor in the catalytic mechanism. Tyr224 serves as a coordination point for substrate.

The protein belongs to the GHMP kinase family. GalK subfamily.

The protein resides in the cytoplasm. The catalysed reaction is alpha-D-galactose + ATP = alpha-D-galactose 1-phosphate + ADP + H(+). The protein operates within carbohydrate metabolism; galactose metabolism. Its function is as follows. Catalyzes the transfer of the gamma-phosphate of ATP to D-galactose to form alpha-D-galactose-1-phosphate (Gal-1-P). The protein is Galactokinase of Fusobacterium nucleatum subsp. nucleatum (strain ATCC 25586 / DSM 15643 / BCRC 10681 / CIP 101130 / JCM 8532 / KCTC 2640 / LMG 13131 / VPI 4355).